A 571-amino-acid chain; its full sequence is RUN and FYVE domain-containing protein 4 (571 aa).

The RUN domain occupies 33 to 166; the sequence is TDTSAELHRL…VAFELDLQQP (134 aa). The disordered stretch occupies residues 174–207; that stretch reads MFSESRCSSSTQTQGRRPRKNKDAPKKIPAAYGG. Residues 178–188 show a composition bias toward polar residues; the sequence is SRCSSSTQTQG. The stretch at 408-481 forms a coiled coil; that stretch reads EVSLQDEIKS…ERRDAMYQEE (74 aa). The segment at 474–567 adopts an FYVE-type zinc-finger fold; sequence RDAMYQEELG…CCPPCAQGRE (94 aa). Residues Cys521, Cys524, Cys537, Cys540, Cys545, Cys548, Cys559, and Cys562 each contribute to the Zn(2+) site.

In terms of assembly, forms homodimers (via coiled coil domain). Interacts with RAB7A. Forms a ternary complex with RAB7A and LAMP2; the interaction with RAB7A is mediated by RUFY4 (via RUN and coiled coil domains). Interacts with GTP-, but not GDP-bound ARL8A and ARL8B. Interacts with dynactin/DCTN1 and the dynein intermediate chain DYNC1I1/2.

The protein localises to the cytoplasmic vesicle. Its subcellular location is the autophagosome. The protein resides in the lysosome. Functionally, ARL8 effector that promotes the coupling of endolysosomes to dynein-dynactin for retrograde transport along microtubules. Acts by binding both GTP-bound ARL8 and dynein-dynactin. In nonneuronal cells, promotes concentration of endolysosomes in the juxtanuclear area. In hippocampal neurons, drives retrograde transport of endolysosomes from the axon to the soma. Positive regulator of macroautophagy in dendritic cells. Increases autophagic flux, probably by stimulating both autophagosome formation and facilitating tethering with lysosomes. Binds to phosphatidylinositol 3-phosphate (PtdIns3P) through its FYVE-type zinc finger. Positive regulator of osteosclast bone-resorbing activity, possibly by promoting late endosome-lysosome fusion by acting as an adapter protein between RAB7A on late endosomes and LAMP2 on primary lysosomes. This chain is RUN and FYVE domain-containing protein 4 (RUFY4), found in Homo sapiens (Human).